The chain runs to 44 residues: Thymosin beta (44 aa).

The tract at residues 1–44 (MSDKHDKPDISEVTKFDKSKLKKTETHEKNPLPTKETIDQEKQG) is disordered. An N-acetylserine modification is found at Ser-2.

As to expression, expressed in regenerating axons.

It localises to the cytoplasm. Its subcellular location is the cytoskeleton. Its function is as follows. Plays an important role in the organization of the cytoskeleton. Binds to and sequesters actin monomers (G actin) and therefore inhibits actin polymerization. May be involved in the regulation of structural plasticity in the CNS. In Aplysia californica (California sea hare), this protein is Thymosin beta.